The chain runs to 314 residues: Homoserine kinase (314 aa).

Pro96 to Cys106 lines the ATP pocket.

Belongs to the GHMP kinase family. Homoserine kinase subfamily.

Its subcellular location is the cytoplasm. It catalyses the reaction L-homoserine + ATP = O-phospho-L-homoserine + ADP + H(+). It participates in amino-acid biosynthesis; L-threonine biosynthesis; L-threonine from L-aspartate: step 4/5. In terms of biological role, catalyzes the ATP-dependent phosphorylation of L-homoserine to L-homoserine phosphate. This chain is Homoserine kinase, found in Mannheimia succiniciproducens (strain KCTC 0769BP / MBEL55E).